A 176-amino-acid chain; its full sequence is Probable DNA-directed RNA polymerase subunit delta (176 aa).

The region spanning 14–81 is the HTH HARE-type domain; it reads CSMIEVVHSV…GENRWGLRSW (68 aa). Residues 90-176 are disordered; it reads EILPQPKPKK…ETEEEEEEEL (87 aa). Positions 106-176 are enriched in acidic residues; it reads DGFDDYIEED…ETEEEEEEEL (71 aa).

This sequence belongs to the RpoE family. As to quaternary structure, RNAP is composed of a core of 2 alpha, a beta and a beta' subunits. The core is associated with a delta subunit and one of several sigma factors.

Its function is as follows. Participates in both the initiation and recycling phases of transcription. In the presence of the delta subunit, RNAP displays an increased specificity of transcription, a decreased affinity for nucleic acids, and an increased efficiency of RNA synthesis because of enhanced recycling. The protein is Probable DNA-directed RNA polymerase subunit delta of Bacillus thuringiensis subsp. konkukian (strain 97-27).